The chain runs to 333 residues: Ribosomal RNA small subunit methyltransferase H (333 aa).

S-adenosyl-L-methionine contacts are provided by residues 39-41 (GGY), D57, F84, D101, and Q108.

Belongs to the methyltransferase superfamily. RsmH family.

The protein localises to the cytoplasm. It carries out the reaction cytidine(1402) in 16S rRNA + S-adenosyl-L-methionine = N(4)-methylcytidine(1402) in 16S rRNA + S-adenosyl-L-homocysteine + H(+). In terms of biological role, specifically methylates the N4 position of cytidine in position 1402 (C1402) of 16S rRNA. The chain is Ribosomal RNA small subunit methyltransferase H from Dinoroseobacter shibae (strain DSM 16493 / NCIMB 14021 / DFL 12).